Consider the following 240-residue polypeptide: UDP-2,3-diacylglucosamine hydrolase (240 aa).

Mn(2+)-binding residues include Asp8, His10, Asp41, Asn79, and His114. 79–80 is a substrate binding site; it reads NR. Substrate contacts are provided by Asp122, Ser160, Asn164, Lys167, and His195. Mn(2+) is bound by residues His195 and His197.

This sequence belongs to the LpxH family. Requires Mn(2+) as cofactor.

The protein resides in the cell inner membrane. It carries out the reaction UDP-2-N,3-O-bis[(3R)-3-hydroxytetradecanoyl]-alpha-D-glucosamine + H2O = 2-N,3-O-bis[(3R)-3-hydroxytetradecanoyl]-alpha-D-glucosaminyl 1-phosphate + UMP + 2 H(+). The protein operates within glycolipid biosynthesis; lipid IV(A) biosynthesis; lipid IV(A) from (3R)-3-hydroxytetradecanoyl-[acyl-carrier-protein] and UDP-N-acetyl-alpha-D-glucosamine: step 4/6. Functionally, hydrolyzes the pyrophosphate bond of UDP-2,3-diacylglucosamine to yield 2,3-diacylglucosamine 1-phosphate (lipid X) and UMP by catalyzing the attack of water at the alpha-P atom. Involved in the biosynthesis of lipid A, a phosphorylated glycolipid that anchors the lipopolysaccharide to the outer membrane of the cell. The chain is UDP-2,3-diacylglucosamine hydrolase from Escherichia coli O6:K15:H31 (strain 536 / UPEC).